Consider the following 39-residue polypeptide: MKFLSLAFVLGLLALANATPLNPGNVIINGDCRVCNVRA.

Residues 1–18 form the signal peptide; that stretch reads MKFLSLAFVLGLLALANA. A propeptide spanning residues 19–23 is cleaved from the precursor; that stretch reads TPLNP. A disulfide bridge connects residues C32 and C35.

This sequence belongs to the bomanin family. As to expression, hemolymph (at protein level).

The protein resides in the secreted. Its function is as follows. Secreted immune-induced peptide induced by Toll signaling. Has a role in resistance bacterial and fungal infections. The strength of antimicrobial activity appears to correlate with the overall level of expression. Has no activity against the fungus C.glabrata in vitro. The polypeptide is Bomanin Short 3 (Drosophila melanogaster (Fruit fly)).